Reading from the N-terminus, the 167-residue chain is NAD(P)H-quinone oxidoreductase subunit I, chloroplastic (167 aa).

4Fe-4S ferredoxin-type domains are found at residues 55–84 (GRIH…VDWK) and 95–124 (LNYS…MTEE). [4Fe-4S] cluster contacts are provided by C64, C67, C70, C74, C104, C107, C110, and C114.

The protein belongs to the complex I 23 kDa subunit family. NDH is composed of at least 16 different subunits, 5 of which are encoded in the nucleus. The cofactor is [4Fe-4S] cluster.

The protein resides in the plastid. It is found in the chloroplast thylakoid membrane. The enzyme catalyses a plastoquinone + NADH + (n+1) H(+)(in) = a plastoquinol + NAD(+) + n H(+)(out). It carries out the reaction a plastoquinone + NADPH + (n+1) H(+)(in) = a plastoquinol + NADP(+) + n H(+)(out). NDH shuttles electrons from NAD(P)H:plastoquinone, via FMN and iron-sulfur (Fe-S) centers, to quinones in the photosynthetic chain and possibly in a chloroplast respiratory chain. The immediate electron acceptor for the enzyme in this species is believed to be plastoquinone. Couples the redox reaction to proton translocation, and thus conserves the redox energy in a proton gradient. The polypeptide is NAD(P)H-quinone oxidoreductase subunit I, chloroplastic (Draba nemorosa (Woodland whitlowgrass)).